We begin with the raw amino-acid sequence, 115 residues long: Probable 4-amino-4-deoxy-L-arabinose-phosphoundecaprenol flippase subunit ArnE (115 aa).

3 consecutive transmembrane segments (helical) span residues 42–62, 65–85, and 93–112; these read PWPWLALLALGLGLLCWLLLL, VEVGSAYPMLALNFVLVTLAA, and VDRRHLAGLLLIVAGVALLG. The region spanning 46-113 is the EamA domain; it reads LALLALGLGL…IVAGVALLGR (68 aa).

Belongs to the ArnE family. As to quaternary structure, heterodimer of ArnE and ArnF.

The protein resides in the cell inner membrane. Its pathway is bacterial outer membrane biogenesis; lipopolysaccharide biosynthesis. Translocates 4-amino-4-deoxy-L-arabinose-phosphoundecaprenol (alpha-L-Ara4N-phosphoundecaprenol) from the cytoplasmic to the periplasmic side of the inner membrane. This chain is Probable 4-amino-4-deoxy-L-arabinose-phosphoundecaprenol flippase subunit ArnE, found in Pseudomonas aeruginosa (strain LESB58).